Reading from the N-terminus, the 215-residue chain is FBD domain-containing protein At3g58975 (215 aa).

Residues 122 to 199 form the FBD domain; that stretch reads RSLTSCPVKK…KLSSCNVQLL (78 aa).

This chain is FBD domain-containing protein At3g58975, found in Arabidopsis thaliana (Mouse-ear cress).